Here is a 92-residue protein sequence, read N- to C-terminus: MKRVHVLVAGRVQGVWYRASAARKASELGLTGWVRNLPDGRVELVAEGDAESVDALLAWCRRGPPLARVTGLDVREMAVTGEFTEFAVLRDV.

The region spanning 3–90 (RVHVLVAGRV…GEFTEFAVLR (88 aa)) is the Acylphosphatase-like domain. Catalysis depends on residues Arg-18 and Asn-36.

The protein belongs to the acylphosphatase family.

It catalyses the reaction an acyl phosphate + H2O = a carboxylate + phosphate + H(+). The sequence is that of Acylphosphatase (acyP) from Methylococcus capsulatus (strain ATCC 33009 / NCIMB 11132 / Bath).